The chain runs to 352 residues: MAIYLDKLKMPIIIGLIVLIIASLTGYYYYTHNTKTSEIIIFAAGSLKIPLDEIASKYSEKYGVNIYIEASGSVEAIRKVTDLGREADIIAVADYRLIPTFLVPNYTSWYIGFATNQVVLVYTDKSKYHEILENNPSEWYKILMRNDVKWGFSDPNKDPCGYRSVGIIGLASIYYNDTSILENLLLNKTNIAVEKVNDTLNLIVPADLKVSENSNLIIRSKSVDLISLVEAGTIDYAFEYQSVAVQHHLKYIKLPDQINLGNPKYAYFYGKVIVKILVGTDKEKSIAMSPIIYGITVLDNAPHRSEALKFLKFLLGNTGREIFEEKGQPYLDEFIVYGKIPEELRSIAGSES.

The first 22 residues, 1–22 (MAIYLDKLKMPIIIGLIVLIIA), serve as a signal peptide directing secretion.

This sequence belongs to the bacterial solute-binding protein 1 family. WtpA subfamily.

This is an uncharacterized protein from Staphylothermus marinus (strain ATCC 43588 / DSM 3639 / JCM 9404 / F1).